The chain runs to 467 residues: Glutamate--tRNA ligase (467 aa).

A 'HIGH' region motif is present at residues 12-22 (PSPTGYLHIGG). Over residues 114 to 128 (EQEAKKEKPRYDGRW) the composition is skewed to basic and acidic residues. A disordered region spans residues 114–140 (EQEAKKEKPRYDGRWRPAPGKTLPTPP). Positions 244 to 248 (KLSKR) match the 'KMSKS' region motif. An ATP-binding site is contributed by Lys-247.

This sequence belongs to the class-I aminoacyl-tRNA synthetase family. Glutamate--tRNA ligase type 1 subfamily. Monomer.

Its subcellular location is the cytoplasm. It carries out the reaction tRNA(Glu) + L-glutamate + ATP = L-glutamyl-tRNA(Glu) + AMP + diphosphate. Its function is as follows. Catalyzes the attachment of glutamate to tRNA(Glu) in a two-step reaction: glutamate is first activated by ATP to form Glu-AMP and then transferred to the acceptor end of tRNA(Glu). In Azoarcus sp. (strain BH72), this protein is Glutamate--tRNA ligase.